A 345-amino-acid polypeptide reads, in one-letter code: Anthranilate phosphoribosyltransferase (345 aa).

5-phospho-alpha-D-ribose 1-diphosphate contacts are provided by residues 77–79 (TAG), 82–83 (GD), threonine 87, 89–92 (NVST), 106–114 (KHGNRAVSG), and serine 118. Glycine 79 provides a ligand contact to anthranilate. Serine 91 provides a ligand contact to Mg(2+). Residue asparagine 109 participates in anthranilate binding. Arginine 164 serves as a coordination point for anthranilate. Residues aspartate 223 and glutamate 224 each contribute to the Mg(2+) site.

The protein belongs to the anthranilate phosphoribosyltransferase family. As to quaternary structure, homodimer. Requires Mg(2+) as cofactor.

It catalyses the reaction N-(5-phospho-beta-D-ribosyl)anthranilate + diphosphate = 5-phospho-alpha-D-ribose 1-diphosphate + anthranilate. It functions in the pathway amino-acid biosynthesis; L-tryptophan biosynthesis; L-tryptophan from chorismate: step 2/5. In terms of biological role, catalyzes the transfer of the phosphoribosyl group of 5-phosphorylribose-1-pyrophosphate (PRPP) to anthranilate to yield N-(5'-phosphoribosyl)-anthranilate (PRA). The protein is Anthranilate phosphoribosyltransferase of Saccharolobus solfataricus (strain ATCC 35092 / DSM 1617 / JCM 11322 / P2) (Sulfolobus solfataricus).